A 431-amino-acid chain; its full sequence is Isocitrate lyase (431 aa).

A disordered region spans residues Met-1–Pro-21. Ser-93–Trp-95 provides a ligand contact to substrate. Asp-155 contacts Mg(2+). Cys-193 serves as the catalytic Proton acceptor. Substrate contacts are provided by residues Gly-194 to His-195, Arg-230, Asn-315 to Ser-319, and Thr-349.

Belongs to the isocitrate lyase/PEP mutase superfamily. Isocitrate lyase family. As to quaternary structure, homotetramer. Mg(2+) is required as a cofactor.

It carries out the reaction D-threo-isocitrate = glyoxylate + succinate. It functions in the pathway carbohydrate metabolism; glyoxylate cycle; (S)-malate from isocitrate: step 1/2. Functionally, involved in the metabolic adaptation in response to environmental changes. Catalyzes the reversible formation of succinate and glyoxylate from isocitrate, a key step of the glyoxylate cycle, which operates as an anaplerotic route for replenishing the tricarboxylic acid cycle during growth on fatty acid substrates. The sequence is that of Isocitrate lyase (aceA) from Corynebacterium efficiens (strain DSM 44549 / YS-314 / AJ 12310 / JCM 11189 / NBRC 100395).